A 74-amino-acid chain; its full sequence is Protein kish-B (74 aa).

The signal sequence occupies residues 1–22 (MTNVYSLDGLLVFALLFVCTCA). The Extracellular segment spans residues 23–52 (YFRKVPRLRSWLLSEKKGVWGVFYKAAVIG). Residues 53-73 (SRLHLAVSISCIAMAFYVLFI) form a helical membrane-spanning segment. Position 74 (K74) is a topological domain, cytoplasmic.

The protein belongs to the KISH family.

The protein resides in the golgi apparatus membrane. Functionally, involved in the early part of the secretory pathway. This chain is Protein kish-B (tmem167b), found in Xenopus laevis (African clawed frog).